The primary structure comprises 274 residues: Elongation factor Ts (274 aa).

The involved in Mg(2+) ion dislocation from EF-Tu stretch occupies residues 79-82 (TDFV).

The protein belongs to the EF-Ts family.

It is found in the cytoplasm. Its function is as follows. Associates with the EF-Tu.GDP complex and induces the exchange of GDP to GTP. It remains bound to the aminoacyl-tRNA.EF-Tu.GTP complex up to the GTP hydrolysis stage on the ribosome. The chain is Elongation factor Ts from Azobacteroides pseudotrichonymphae genomovar. CFP2.